The primary structure comprises 50 residues: Protein PsbN (50 aa).

Residues 14–34 form a helical membrane-spanning segment; it reads IAVTILALLLALTGFGLWTAF.

Belongs to the PsbN family.

The protein resides in the cellular thylakoid membrane. May play a role in photosystem I and II biogenesis. The protein is Protein PsbN of Prochlorococcus marinus (strain MIT 9301).